Here is a 438-residue protein sequence, read N- to C-terminus: UDP-N-acetyl-D-mannosamine dehydrogenase (438 aa).

Positions 21, 22, 41, 46, 93, and 131 each coordinate NAD(+). UDP-N-acetyl-alpha-D-mannosaminouronate contacts are provided by arginine 160, valine 161, lysine 212, asparagine 216, arginine 219, histidine 250, arginine 252, and glycine 263. The active-site Proton donor/acceptor is the lysine 212. Cysteine 266 serves as the catalytic Nucleophile. Residues tyrosine 323 and lysine 324 each coordinate UDP-N-acetyl-alpha-D-mannosaminouronate. Arginine 331 lines the NAD(+) pocket. Lysine 409 is a binding site for UDP-N-acetyl-alpha-D-mannosaminouronate.

It belongs to the UDP-glucose/GDP-mannose dehydrogenase family. Homotetramer; probably dimer of dimers.

It catalyses the reaction UDP-N-acetyl-alpha-D-mannosamine + 2 NAD(+) + H2O = UDP-N-acetyl-alpha-D-mannosaminouronate + 2 NADH + 3 H(+). Functionally, catalyzes the four-electron oxidation of UDP-N-acetyl-D-mannosamine (UDP-ManNAc), reducing NAD(+) and releasing UDP-N-acetylmannosaminuronic acid (UDP-ManNAcA). The sequence is that of UDP-N-acetyl-D-mannosamine dehydrogenase (wecC) from Methanococcus aeolicus (strain ATCC BAA-1280 / DSM 17508 / OCM 812 / Nankai-3).